The primary structure comprises 122 residues: Large ribosomal subunit protein uL14 (122 aa).

This sequence belongs to the universal ribosomal protein uL14 family. As to quaternary structure, part of the 50S ribosomal subunit. Forms a cluster with proteins L3 and L19. In the 70S ribosome, L14 and L19 interact and together make contacts with the 16S rRNA in bridges B5 and B8.

Binds to 23S rRNA. Forms part of two intersubunit bridges in the 70S ribosome. The chain is Large ribosomal subunit protein uL14 from Francisella philomiragia subsp. philomiragia (strain ATCC 25017 / CCUG 19701 / FSC 153 / O#319-036).